The sequence spans 247 residues: DNA polymerase sliding clamp (247 aa).

This sequence belongs to the PCNA family. As to quaternary structure, homotrimer. The subunits circularize to form a toroid; DNA passes through its center. Replication factor C (RFC) is required to load the toroid on the DNA.

Functionally, sliding clamp subunit that acts as a moving platform for DNA processing. Responsible for tethering the catalytic subunit of DNA polymerase and other proteins to DNA during high-speed replication. This Methanoregula boonei (strain DSM 21154 / JCM 14090 / 6A8) protein is DNA polymerase sliding clamp.